Here is a 1522-residue protein sequence, read N- to C-terminus: Myosin-15 (1522 aa).

A Myosin N-terminal SH3-like domain is found at 12 to 61 (RKGDKVWVEDKDLAWIAADVLDSFDNKLHVETSTGKKVFVSPEKLFRRDP). The Myosin motor domain maps to 67 to 737 (NGVDDMTKLT…QIGILDSRRA (671 aa)). ATP is bound by residues 161–168 (GESGAGKT) and 214–222 (NDNSSRFGK). Actin-binding regions lie at residues 499–533 (LIEK…FQNF), 535–558 (FHPR…AGKV), 593–618 (FPSA…KQQL), and 618–640 (LQAL…KPNS). 5 consecutive IQ domains span residues 763–792 (ARAS…AAAA), 788–817 (NAAA…AAIV), 811–840 (LVSA…HRAA), 836–865 (EHRA…SIIA), and 859–888 (RQSS…VANE). Positions 889–1059 (AGALRLAKTK…NQVLMQKTLI (171 aa)) form a coiled coil. The 293-residue stretch at 1164–1456 (NIIIEGINEA…VSQMRVLVDK (293 aa)) folds into the Dilute domain.

This sequence belongs to the TRAFAC class myosin-kinesin ATPase superfamily. Myosin family. Plant myosin class XI subfamily. In terms of assembly, homodimer. Interacts with MYOB1 and MYOB7. Interacts with WIT1 and WIT2. Core component of the LINC complex which is composed of inner nuclear membrane SUN domain-containing proteins coupled to outer nuclear membrane WIP and WIT proteins. The LINC complex also involves nucleoskeletal proteins CRWN/LINC and possibly KAKU4 and the cytoskeletal myosin KAKU1.

The protein localises to the cytoplasm. The protein resides in the nucleus membrane. In terms of biological role, myosin heavy chain that is required for the cell cycle-regulated transport of various organelles and proteins for their segregation. Functions by binding with its tail domain to receptor proteins on organelles and exerting force with its N-terminal motor domain against actin filaments, thereby transporting its cargo along polarized actin cables. Involved in trafficking of Golgi stacks and mitochondria. Plays a role in nuclear shape determination. Drives nuclear movement along actin filaments. As component of the SUN-WIP-WIT2-KAKU1 complex, mediates the transfer of cytoplasmic forces to the nuclear envelope (NE), leading to nuclear shape changes. In Arabidopsis thaliana (Mouse-ear cress), this protein is Myosin-15 (XI-I).